Reading from the N-terminus, the 218-residue chain is Capsid protein (218 aa).

Methionine 1 is modified (N-acetylmethionine; by host). The tract at residues 1–28 is disordered; it reads MDKSESTSAGRNRRRRPRRGSRSAPSSA. Over residues 11–21 the composition is skewed to basic residues; the sequence is RNRRRRPRRGS.

The protein belongs to the cucumovirus capsid protein family.

It is found in the virion. In terms of biological role, capsid protein. Probably binds RNA and plays a role in packaging. The protein is Capsid protein of Cucumis sativus (Cucumber).